A 429-amino-acid polypeptide reads, in one-letter code: Lysophosphatidic acid phosphatase type 6 (429 aa).

A mitochondrion-targeting transit peptide spans 1-32 (MISRVFKLRMWAPVGVLTSLTYCLHQRRVALA). Positions 58–169 (RHGARSPLKP…VFIRSTNIYR (112 aa)) are substrate binding. The active-site Nucleophile is the His-59. Asp-336 functions as the Proton donor in the catalytic mechanism.

Belongs to the histidine acid phosphatase family. In terms of assembly, monomer. As to expression, detected in brain (at protein level).

It localises to the mitochondrion. The catalysed reaction is a phosphate monoester + H2O = an alcohol + phosphate. It catalyses the reaction 1-(9Z-octadecenoyl)-sn-glycero-3-phosphate + H2O = 1-(9Z-octadecenoyl)-sn-glycerol + phosphate. Functionally, hydrolyzes lysophosphatidic acid (LPA) containing a medium length fatty acid chain to the corresponding monoacylglycerol. Has highest activity with lysophosphatidic acid containing myristate (C14:0), monounsaturated oleate (C18:1) or palmitate (C16:0), and lower activity with C18:0 and C6:0 lysophosphatidic acid. The polypeptide is Lysophosphatidic acid phosphatase type 6 (ACP6) (Bos taurus (Bovine)).